The chain runs to 165 residues: Protein SprT (165 aa).

In terms of domain architecture, SprT-like spans 22–163 (LAQANLKLDR…RCVHCGEPLV (142 aa)). H78 contributes to the Zn(2+) binding site. Residue E79 is part of the active site. H82 provides a ligand contact to Zn(2+).

Belongs to the SprT family. It depends on Zn(2+) as a cofactor.

It localises to the cytoplasm. This Salmonella paratyphi C (strain RKS4594) protein is Protein SprT.